We begin with the raw amino-acid sequence, 247 residues long: tRNA pseudouridine synthase A (247 aa).

D52 acts as the Nucleophile in catalysis. Y110 provides a ligand contact to substrate.

It belongs to the tRNA pseudouridine synthase TruA family. As to quaternary structure, homodimer.

The catalysed reaction is uridine(38/39/40) in tRNA = pseudouridine(38/39/40) in tRNA. Its function is as follows. Formation of pseudouridine at positions 38, 39 and 40 in the anticodon stem and loop of transfer RNAs. The protein is tRNA pseudouridine synthase A of Hyphomonas neptunium (strain ATCC 15444).